A 119-amino-acid polypeptide reads, in one-letter code: Protein SPIRAL1 (119 aa).

Positions 1 to 11 are enriched in gly residues; that stretch reads MGRGNSCGGGQ. Disordered regions lie at residues 1-47 and 85-105; these read MGRG…PPVT and EGQN…HAAP. Residues 24–34 show a composition bias toward pro residues; it reads APKPVPAPRPA.

Belongs to the SPIRAL1 family. Post-translationally, ubiquitinated. Upon salt-stress induction, it is subject to proteasome-dependent degradation. In terms of tissue distribution, ubiquitous. High expression was associated with tissues undergoing rapid cell expansion, including the root elongation zone, hypocotyls of dark grown-seedlings, and cotyledons of light-grown seedlings.

The protein resides in the cytoplasm. It localises to the cytoskeleton. It is found in the phragmoplast. The protein localises to the spindle. Functionally, required for directional control of cell elongation. Stabilizes growing ends of cortical microtubules and influences their dynamic properties. Acts redundantly with SP1Ls in maintaining the cortical microtubules organization essential for anisotropic cell growth. Plays a key role in salt stress-induced microtubules disassembly. This Arabidopsis thaliana (Mouse-ear cress) protein is Protein SPIRAL1 (SPR1).